A 216-amino-acid chain; its full sequence is Urease accessory protein UreG (216 aa).

25-32 (GPVGSGKT) lines the GTP pocket.

It belongs to the SIMIBI class G3E GTPase family. UreG subfamily. In terms of assembly, homodimer. UreD, UreF and UreG form a complex that acts as a GTP-hydrolysis-dependent molecular chaperone, activating the urease apoprotein by helping to assemble the nickel containing metallocenter of UreC. The UreE protein probably delivers the nickel.

Its subcellular location is the cytoplasm. Functionally, facilitates the functional incorporation of the urease nickel metallocenter. This process requires GTP hydrolysis, probably effectuated by UreG. The chain is Urease accessory protein UreG from Burkholderia mallei (strain NCTC 10247).